Reading from the N-terminus, the 159-residue chain is SsrA-binding protein (159 aa).

Over residues 137–147 the composition is skewed to basic and acidic residues; sequence LAERQANRETE. Residues 137-159 are disordered; sequence LAERQANRETEQAVGRRLKGMHD.

This sequence belongs to the SmpB family.

It localises to the cytoplasm. In terms of biological role, required for rescue of stalled ribosomes mediated by trans-translation. Binds to transfer-messenger RNA (tmRNA), required for stable association of tmRNA with ribosomes. tmRNA and SmpB together mimic tRNA shape, replacing the anticodon stem-loop with SmpB. tmRNA is encoded by the ssrA gene; the 2 termini fold to resemble tRNA(Ala) and it encodes a 'tag peptide', a short internal open reading frame. During trans-translation Ala-aminoacylated tmRNA acts like a tRNA, entering the A-site of stalled ribosomes, displacing the stalled mRNA. The ribosome then switches to translate the ORF on the tmRNA; the nascent peptide is terminated with the 'tag peptide' encoded by the tmRNA and targeted for degradation. The ribosome is freed to recommence translation, which seems to be the essential function of trans-translation. In Nocardioides sp. (strain ATCC BAA-499 / JS614), this protein is SsrA-binding protein.